Reading from the N-terminus, the 303-residue chain is RELT-like protein 2 (303 aa).

Residues leucine 15–isoleucine 35 form a helical membrane-spanning segment. Disordered stretches follow at residues cysteine 46–methionine 67 and cysteine 132–methionine 303. A Phosphoserine modification is found at serine 52. Basic and acidic residues-rich tracts occupy residues arginine 148 to threonine 158 and threonine 172 to proline 188. Residues glycine 194–proline 212 show a composition bias toward gly residues. Polar residues predominate over residues glutamine 278–leucine 296.

It belongs to the RELT family. In terms of assembly, interacts with RELT, RELL1 and OXSR1. Interacts with PLSCR1. Interacts with TRAF2. In terms of processing, phosphorylated in vitro by OXSR1. Primarily expressed in spleen, thymus, testis, peripheral blood leukocytes, brain and placenta. Not detected in prostate, ovary, small intestine, colon, heart, lung, liver, skeletal muscle, kidney and pancreas.

Its subcellular location is the cell membrane. In terms of biological role, induces activation of MAPK14/p38 cascade, when overexpressed. Induces apoptosis, when overexpressed. The chain is RELT-like protein 2 (RELL2) from Homo sapiens (Human).